We begin with the raw amino-acid sequence, 363 residues long: 3-isopropylmalate dehydrogenase (363 aa).

78 to 91 is a binding site for NAD(+); the sequence is GPKWEHLPPAEQPE. Substrate-binding residues include Arg-99, Arg-109, Arg-138, and Asp-227. Mg(2+) contacts are provided by Asp-227, Asp-251, and Asp-255. Residue 285–297 participates in NAD(+) binding; it reads GSAPDIAGKGIAN.

This sequence belongs to the isocitrate and isopropylmalate dehydrogenases family. LeuB type 1 subfamily. Homodimer. It depends on Mg(2+) as a cofactor. Mn(2+) is required as a cofactor.

It is found in the cytoplasm. It catalyses the reaction (2R,3S)-3-isopropylmalate + NAD(+) = 4-methyl-2-oxopentanoate + CO2 + NADH. It participates in amino-acid biosynthesis; L-leucine biosynthesis; L-leucine from 3-methyl-2-oxobutanoate: step 3/4. In terms of biological role, catalyzes the oxidation of 3-carboxy-2-hydroxy-4-methylpentanoate (3-isopropylmalate) to 3-carboxy-4-methyl-2-oxopentanoate. The product decarboxylates to 4-methyl-2 oxopentanoate. This Photorhabdus laumondii subsp. laumondii (strain DSM 15139 / CIP 105565 / TT01) (Photorhabdus luminescens subsp. laumondii) protein is 3-isopropylmalate dehydrogenase.